The primary structure comprises 72 residues: Translation initiation factor IF-1 (72 aa).

The 72-residue stretch at 1–72 (MAKEDVIEIE…TRGRITYRFK (72 aa)) folds into the S1-like domain.

It belongs to the IF-1 family. In terms of assembly, component of the 30S ribosomal translation pre-initiation complex which assembles on the 30S ribosome in the order IF-2 and IF-3, IF-1 and N-formylmethionyl-tRNA(fMet); mRNA recruitment can occur at any time during PIC assembly.

Its subcellular location is the cytoplasm. One of the essential components for the initiation of protein synthesis. Stabilizes the binding of IF-2 and IF-3 on the 30S subunit to which N-formylmethionyl-tRNA(fMet) subsequently binds. Helps modulate mRNA selection, yielding the 30S pre-initiation complex (PIC). Upon addition of the 50S ribosomal subunit IF-1, IF-2 and IF-3 are released leaving the mature 70S translation initiation complex. This Streptococcus suis (strain 05ZYH33) protein is Translation initiation factor IF-1.